The following is a 124-amino-acid chain: ATP synthase epsilon chain (124 aa).

It belongs to the ATPase epsilon chain family. F-type ATPases have 2 components, CF(1) - the catalytic core - and CF(0) - the membrane proton channel. CF(1) has five subunits: alpha(3), beta(3), gamma(1), delta(1), epsilon(1). CF(0) has three main subunits: a, b and c.

It is found in the cell membrane. In terms of biological role, produces ATP from ADP in the presence of a proton gradient across the membrane. This chain is ATP synthase epsilon chain, found in Corynebacterium efficiens (strain DSM 44549 / YS-314 / AJ 12310 / JCM 11189 / NBRC 100395).